Here is a 464-residue protein sequence, read N- to C-terminus: MKNVLTPRQIVERLDQYIVGQEGAKRSVAIALRNRYRRFQLEDKLRDEITPKNILMIGPTGVGKTEIARRLAKLVGAPFVKVEATKFTEVGYVGRDVESMIRDLVETSVRLVKEEKMKGVKKQAEEQANQRIVELLVPAKKKTQAYKNPLEMLFGQQQENTDHQETSAEQDTLTERRRRMSHQLALGELEDHYVTVEVEEQTPQFFDMLQGSGMEQMGMNMQEMLGNMMPKKRKKRKLTVREARRVLTEEEAQKLIDMDEVTQEAVSKAEQLGIVFIDEIDKIAGKGQQSADVSREGVQRDILPIVEGSTVVTKYGPVSTDHMLFIGAGAFHVAKPSDLIPELQGRFPIRVELSNLTVDDFVRILVEPDNALLKQYAALLETEGIKIVFTDEAVHKIATIATEVNQETENIGARRLHTLLERLLEDLSFEAPDVNLEEIVITPEYVTEKLAAIAKNRDLSQYIL.

ATP is bound by residues Val-19, 61–66, Asp-278, Glu-342, and Arg-414; that span reads GVGKTE.

Belongs to the ClpX chaperone family. HslU subfamily. A double ring-shaped homohexamer of HslV is capped on each side by a ring-shaped HslU homohexamer. The assembly of the HslU/HslV complex is dependent on binding of ATP.

Its subcellular location is the cytoplasm. In terms of biological role, ATPase subunit of a proteasome-like degradation complex; this subunit has chaperone activity. The binding of ATP and its subsequent hydrolysis by HslU are essential for unfolding of protein substrates subsequently hydrolyzed by HslV. HslU recognizes the N-terminal part of its protein substrates and unfolds these before they are guided to HslV for hydrolysis. The sequence is that of ATP-dependent protease ATPase subunit HslU from Halalkalibacterium halodurans (strain ATCC BAA-125 / DSM 18197 / FERM 7344 / JCM 9153 / C-125) (Bacillus halodurans).